The chain runs to 1527 residues: DNA-directed RNA polymerase subunit beta'' (1527 aa).

Residues Cys220, Cys296, Cys303, and Cys306 each contribute to the Zn(2+) site. Basic and acidic residues-rich tracts occupy residues 644 to 661 (RTQE…RTRE) and 671 to 681 (PENKYRTREGE). Disordered regions lie at residues 644 to 681 (RTQE…REGE) and 712 to 793 (YRTL…KKEG). 2 stretches are compositionally biased toward acidic residues: residues 737-755 (GEYE…SSED) and 763-786 (TLEE…PEED).

Belongs to the RNA polymerase beta' chain family. RpoC2 subfamily. As to quaternary structure, in plastids the minimal PEP RNA polymerase catalytic core is composed of four subunits: alpha, beta, beta', and beta''. When a (nuclear-encoded) sigma factor is associated with the core the holoenzyme is formed, which can initiate transcription. Zn(2+) is required as a cofactor.

It localises to the plastid. The protein localises to the chloroplast. It catalyses the reaction RNA(n) + a ribonucleoside 5'-triphosphate = RNA(n+1) + diphosphate. Its function is as follows. DNA-dependent RNA polymerase catalyzes the transcription of DNA into RNA using the four ribonucleoside triphosphates as substrates. This Zea mays (Maize) protein is DNA-directed RNA polymerase subunit beta''.